We begin with the raw amino-acid sequence, 429 residues long: Endo-1,4-beta-xylanase 1 (429 aa).

An N-terminal signal peptide occupies residues 1–19 (MQTKSILTAALLAAAPASA). In terms of domain architecture, GH10 spans 43-336 (NSDQQYNRIL…KPAWTSISSV (294 aa)). Glu-150 (proton donor) is an active-site residue. The active-site Nucleophile is the Glu-257. Residues Cys-286 and Cys-292 are joined by a disulfide bond. The interval 364–395 (TTPPPISSPIVPSTTTTSAVPTTTVSPPEPEQ) is disordered. Low complexity predominate over residues 371 to 389 (SPIVPSTTTTSAVPTTTVS). The CBM1 domain occupies 393–429 (PEQTRWGQCGGIGWNGPTKCQSPWTCTRLNDWYFQCL).

It belongs to the glycosyl hydrolase 10 (cellulase F) family.

The protein localises to the secreted. The catalysed reaction is Endohydrolysis of (1-&gt;4)-beta-D-xylosidic linkages in xylans.. It functions in the pathway glycan degradation; xylan degradation. Its function is as follows. Endo-1,4-beta-xylanase involved in the hydrolysis of xylan, a major structural heterogeneous polysaccharide found in plant biomass representing the second most abundant polysaccharide in the biosphere, after cellulose. This chain is Endo-1,4-beta-xylanase 1, found in Humicola insolens (Soft-rot fungus).